The sequence spans 482 residues: Putative metabolite transport protein YfiG (482 aa).

Over Met-1 to Thr-29 the chain is Cytoplasmic. Residues Phe-30–Ala-50 form a helical membrane-spanning segment. The Extracellular segment spans residues Thr-51–Pro-59. Residues Val-60–Gly-80 form a helical membrane-spanning segment. Residues Gly-81–Thr-92 lie on the Cytoplasmic side of the membrane. Residues Ile-93–Ala-113 form a helical membrane-spanning segment. The Extracellular portion of the chain corresponds to Ser-114–Arg-120. Residues Phe-121–Ile-141 form a helical membrane-spanning segment. Over Ser-142–Glu-155 the chain is Cytoplasmic. Residues Leu-156–Met-176 traverse the membrane as a helical segment. Over Gly-177–Arg-184 the chain is Extracellular. A helical membrane pass occupies residues Tyr-185 to Pro-205. Topologically, residues Glu-206–Arg-263 are cytoplasmic. A helical membrane pass occupies residues Ile-264–Met-284. At Tyr-285 to Ala-301 the chain is on the extracellular side. Residues Leu-302–Leu-322 form a helical membrane-spanning segment. Residues Leu-323–Met-331 are Cytoplasmic-facing. Helical transmembrane passes span Leu-332–Val-352 and Leu-353–Phe-373. Topologically, residues Gln-374–Gly-400 are cytoplasmic. The chain crosses the membrane as a helical span at residues Ile-401–Leu-421. At Asn-422–His-423 the chain is on the extracellular side. Residues Ile-424 to Val-444 form a helical membrane-spanning segment. Residues Lys-445–Ser-482 lie on the Cytoplasmic side of the membrane.

The protein belongs to the major facilitator superfamily. Sugar transporter (TC 2.A.1.1) family.

It is found in the cell membrane. The chain is Putative metabolite transport protein YfiG (yfiG) from Bacillus subtilis (strain 168).